Consider the following 301-residue polypeptide: Probable alpha-L-glutamate ligase 1 (301 aa).

One can recognise an ATP-grasp domain in the interval L104–E287. ATP contacts are provided by residues K141, E178 to Y179, D187, and R211 to N213. Mg(2+) is bound by residues D248, E260, and N262. The Mn(2+) site is built by D248, E260, and N262.

The protein belongs to the RimK family. It depends on Mg(2+) as a cofactor. Requires Mn(2+) as cofactor.

This chain is Probable alpha-L-glutamate ligase 1, found in Shewanella oneidensis (strain ATCC 700550 / JCM 31522 / CIP 106686 / LMG 19005 / NCIMB 14063 / MR-1).